Here is a 349-residue protein sequence, read N- to C-terminus: Phosphoribosylformylglycinamidine cyclo-ligase (349 aa).

The protein belongs to the AIR synthase family.

Its subcellular location is the cytoplasm. The enzyme catalyses 2-formamido-N(1)-(5-O-phospho-beta-D-ribosyl)acetamidine + ATP = 5-amino-1-(5-phospho-beta-D-ribosyl)imidazole + ADP + phosphate + H(+). The protein operates within purine metabolism; IMP biosynthesis via de novo pathway; 5-amino-1-(5-phospho-D-ribosyl)imidazole from N(2)-formyl-N(1)-(5-phospho-D-ribosyl)glycinamide: step 2/2. The polypeptide is Phosphoribosylformylglycinamidine cyclo-ligase (Bordetella avium (strain 197N)).